The primary structure comprises 373 residues: Dual-specificity RNA methyltransferase RlmN (373 aa).

The active-site Proton acceptor is the E94. In terms of domain architecture, Radical SAM core spans 100–339 (EDDRATLCVS…VIVRKTRGDD (240 aa)). A disulfide bridge links C107 with C344. The [4Fe-4S] cluster site is built by C114, C118, and C121. S-adenosyl-L-methionine is bound by residues 168-169 (GE), S200, 222-224 (SIH), and N301. C344 acts as the S-methylcysteine intermediate in catalysis.

It belongs to the radical SAM superfamily. RlmN family. The cofactor is [4Fe-4S] cluster.

It localises to the cytoplasm. The catalysed reaction is adenosine(2503) in 23S rRNA + 2 reduced [2Fe-2S]-[ferredoxin] + 2 S-adenosyl-L-methionine = 2-methyladenosine(2503) in 23S rRNA + 5'-deoxyadenosine + L-methionine + 2 oxidized [2Fe-2S]-[ferredoxin] + S-adenosyl-L-homocysteine. It catalyses the reaction adenosine(37) in tRNA + 2 reduced [2Fe-2S]-[ferredoxin] + 2 S-adenosyl-L-methionine = 2-methyladenosine(37) in tRNA + 5'-deoxyadenosine + L-methionine + 2 oxidized [2Fe-2S]-[ferredoxin] + S-adenosyl-L-homocysteine. Its function is as follows. Specifically methylates position 2 of adenine 2503 in 23S rRNA and position 2 of adenine 37 in tRNAs. m2A2503 modification seems to play a crucial role in the proofreading step occurring at the peptidyl transferase center and thus would serve to optimize ribosomal fidelity. The protein is Dual-specificity RNA methyltransferase RlmN of Shewanella sp. (strain MR-4).